Here is a 262-residue protein sequence, read N- to C-terminus: Ribose-5-phosphate isomerase A (262 aa).

Substrate-binding positions include 33–36 (TGST), 89–92 (DGTD), and 102–105 (KGGG). Residue Glu111 is the Proton acceptor of the active site. Lys129 lines the substrate pocket.

The protein belongs to the ribose 5-phosphate isomerase family. As to quaternary structure, homodimer.

The enzyme catalyses aldehydo-D-ribose 5-phosphate = D-ribulose 5-phosphate. It participates in carbohydrate degradation; pentose phosphate pathway; D-ribose 5-phosphate from D-ribulose 5-phosphate (non-oxidative stage): step 1/1. Its function is as follows. Catalyzes the reversible conversion of ribose-5-phosphate to ribulose 5-phosphate. The chain is Ribose-5-phosphate isomerase A from Jannaschia sp. (strain CCS1).